Reading from the N-terminus, the 1760-residue chain is MSNRYSVYSSHSAAFSTGGRAPQAGGQVSTTTLLNALHAHYTTGQPYQLDAGTSLVVNTLLTATQSSPEGHTGPTIDHELAVRAWEHARRRAEDGCIVLCSAHHSAPSILEPFLAALPLSTPSIAFTALAALRPFLTAVTTFNPSYSLYSALSACYNLTLKGDITGLSLALSTSGINVRKGFLDIPSEPGYRAFDVFYYLLTSASTPAEREFLDLRDASSYALLRKSGTYTPPSYLPTADDAAAAEDFRSALKAIGIKGASQRGLLSVLAGLLKLGNAAGFLVDQEDLEEACEDVGGLLGIDPEVLLHKCSTDDREVLISGIYEALVDWVIGKANEAIASQLQASLDDSSRGSGQAAQWTDDDTVSITVVDLPRPALGKAVAMRGIFDDTLGINAEMKDDGVVVPPAGPAVLNDMTAAIAQVEVDLGITTGPTWREREYELDKKHEVLEKVGLEVEMDSFLRQILFTAESEGITLGKKGRFDLATTLGSSRVWHHISIHPTDDLPENLSPGVPTAAWSAGAVSRQLREWRLAEWANRRLKQIDFTADFDIEEFIGRYFRLGCGEGKDGVENWLVERGWINGDAVVGHQRIWVRENAWWEAETMLDLKPEEPPAASPFMYGGGMLDPGVPHYAVPPIAESTSLLGSRDNLLNRQSTLVPSVAGGAKSIAPSAPHTLHTGGDYGLGTKGDDKKYDSHPYYDDEGRYLGELDPEYADPKHIEKKEITLGRRIWTGFVWALTFWIPSFVLRFVGRMKRPDVRMAWREKLVLVFLILLFNAIVCFYIIAFGNLLCPNKDKVWNEKEVSYHQGNNDFYVSIHGKVYDISKFWKIQHSDTSIETTTSNMEPFMGENLDAYFPPPLTRLCGDFVTDESITLRNNDTNAVLYSNAKHSCGPLQQTDPNTALHKITWYEDVFLPKIDEYYKGSLVWKRSEVSKQADSSSRYWVIKDESIYDLTDYFYTLKQMNNIDSYNFLPSSITELFKNYPGTDVTDKWPNSENATKAQTCLDYVFYKGKVDFRDSARCQVNNYILLAFTCLICAVILVKFLAALQLGSKRRPAPQDKFVICLVPAYTEGEDSLRKGLDSLTALQYDNKRKLIYVICDGMIVGGGNDRPTPKIVLDILGVDPKIDPPALPFKSIGQGSDQLNYGKVYSGLYEYEGNVVPYIVVVKVGKESEQSKSKPGNRGKRDSQIQIMNFLNRVHHRAPMSPLELEIFHQINNVIGVDPELYEYCLMVDADTSVREDSLNRLVAACANDARIAGICGETSLQNEERSWWTMIQVYEYYISHHLSKAFESLFGSVTCLPGCFCMYRLRTADKGRPLIISDKVIKEYADNDVDTLHKKNLLSLGEDRYLTTLMTKHFPTMSYKFIPDAYASTAAPETFSVLLSQRRRWINSTVHNLVELAALKDLCGFCCFSMRFVVLVDLLGTIILPATCVYLGYLIYSVASGGPIPIISIAILAGVYGLQAIIFIVKRQWQHIGWMIIYICAYPIYSFVLPMYSFWKQDDFSWGNTRVVLGEKGNKRVVAVEDEPFDPRSIPLQRWDDYALANNLPGRRGDYNMSQEKFYGGQYGDMGMEMDDMHSQYSSVKPASTILTGFPGAGRNGSPYMPPQSPAPFGGNTPGNRHSHLSSFSRYTDMPLQPGHQSRNLSVGNLSQFQDPSNRHSVGLMQSTDNLLGVPRPNSRSPVGGYTSRPQSAFDFRGSGGPDEMAITDAIRSCLAEVDLDTVTKKQVRALVEQRLQATLTGDKRAFLDRQIDQELANM.

Asparagine 157 is a glycosylation site (N-linked (GlcNAc...) asparagine). 2 helical membrane passes run 729–749 and 765–785; these read IWTG…LRFV and LVLV…IIAF. N-linked (GlcNAc...) asparagine glycosylation is found at asparagine 876 and asparagine 996. A helical transmembrane segment spans residues 1027 to 1047; sequence ILLAFTCLICAVILVKFLAAL. Asparagine 1392 carries N-linked (GlcNAc...) asparagine glycosylation. The next 3 helical transmembrane spans lie at 1417–1437, 1449–1469, and 1477–1497; these read FVVL…VYLG, IPII…IIFI, and IGWM…LPMY. N-linked (GlcNAc...) asparagine glycans are attached at residues asparagine 1557, asparagine 1645, and asparagine 1650. The tract at residues 1670–1691 is disordered; sequence DNLLGVPRPNSRSPVGGYTSRP. The DEK-C domain occupies 1702 to 1758; it reads GPDEMAITDAIRSCLAEVDLDTVTKKQVRALVEQRLQATLTGDKRAFLDRQIDQELA.

It belongs to the chitin synthase family. Class V subfamily.

The protein localises to the cell membrane. It catalyses the reaction [(1-&gt;4)-N-acetyl-beta-D-glucosaminyl](n) + UDP-N-acetyl-alpha-D-glucosamine = [(1-&gt;4)-N-acetyl-beta-D-glucosaminyl](n+1) + UDP + H(+). In terms of biological role, polymerizes chitin, a structural polymer of the cell wall and septum, by transferring the sugar moiety of UDP-GlcNAc to the non-reducing end of the growing chitin polymer. Plays an important role in cell-wall formation during both hyphal growth and conidiation. The sequence is that of Chitin synthase A from Aspergillus oryzae (strain ATCC 42149 / RIB 40) (Yellow koji mold).